Reading from the N-terminus, the 712-residue chain is Methionine--tRNA ligase (712 aa).

The 'HIGH' region motif lies at 20–30 (PYANGKAHIGH). Positions 151, 154, 163, and 167 each coordinate Zn(2+). Residues 334–338 (KFSKT) carry the 'KMSKS' region motif. Lys337 serves as a coordination point for ATP. The segment at 559-585 (ANAKKSAAKGGEKEPSKSEGMGPSEEA) is disordered. The 103-residue stretch at 610 to 712 (DFAKLDIRVG…KEIKPGSRIR (103 aa)) folds into the tRNA-binding domain.

It belongs to the class-I aminoacyl-tRNA synthetase family. MetG type 1 subfamily. In terms of assembly, homodimer. Zn(2+) is required as a cofactor.

Its subcellular location is the cytoplasm. The enzyme catalyses tRNA(Met) + L-methionine + ATP = L-methionyl-tRNA(Met) + AMP + diphosphate. In terms of biological role, is required not only for elongation of protein synthesis but also for the initiation of all mRNA translation through initiator tRNA(fMet) aminoacylation. The chain is Methionine--tRNA ligase from Methanosarcina acetivorans (strain ATCC 35395 / DSM 2834 / JCM 12185 / C2A).